The chain runs to 387 residues: MKALHFGAGNIGRGFIGKLLADAGAQLTFADVNQPLLDALNKRKSYQVNVVGEQARVEEVKNVSAVNSGSPEVVALIAEADIVTTAVGPQILARIAATVAQGLITRHQQGNTRPLNIIACENMVRGTSQLKQHVFAALSEDEQRWVEQHVGFVDSAVDRIVPPSEAGSTDILAVTVETFSEWIVDGTQFKGQPPEIVGMELTDNLMAFVERKLFTLNTGHAITAYLGQLAGHQTIRDAILDPAVRQTVKGAMEESGAVLIKRYAFDPQKHAAYINKILSRFENPYLHDDVERVGRQPLRKLSAGDRLIKPLLGTLEYQLPHDSLVTGIAAAMSYRSEQDPQAQELVTLLAQLGPKAALAQISDLPADSEVVEQAVSVYNAMQQKLAH.

Ala3–Gly14 contributes to the NAD(+) binding site.

Belongs to the mannitol dehydrogenase family.

It carries out the reaction D-mannitol 1-phosphate + NAD(+) = beta-D-fructose 6-phosphate + NADH + H(+). This is Mannitol-1-phosphate 5-dehydrogenase from Yersinia pseudotuberculosis serotype IB (strain PB1/+).